The sequence spans 91 residues: Small ribosomal subunit protein uS15 (91 aa).

It belongs to the universal ribosomal protein uS15 family. As to quaternary structure, part of the 30S ribosomal subunit. Forms a bridge to the 50S subunit in the 70S ribosome, contacting the 23S rRNA.

One of the primary rRNA binding proteins, it binds directly to 16S rRNA where it helps nucleate assembly of the platform of the 30S subunit by binding and bridging several RNA helices of the 16S rRNA. Its function is as follows. Forms an intersubunit bridge (bridge B4) with the 23S rRNA of the 50S subunit in the ribosome. The protein is Small ribosomal subunit protein uS15 of Sulfurimonas denitrificans (strain ATCC 33889 / DSM 1251) (Thiomicrospira denitrificans (strain ATCC 33889 / DSM 1251)).